A 38-amino-acid polypeptide reads, in one-letter code: Kunitz-type trypsin inhibitor beta chain (38 aa).

This sequence belongs to the protease inhibitor I3 (leguminous Kunitz-type inhibitor) family. In terms of assembly, heterodimer of an alpha and a beta chain linked by a disulfide bond.

Its function is as follows. Inhibition of trypsin. This chain is Kunitz-type trypsin inhibitor beta chain, found in Neltuma juliflora (Mesquite).